We begin with the raw amino-acid sequence, 492 residues long: Aspartyl/glutamyl-tRNA(Asn/Gln) amidotransferase subunit B (492 aa).

The protein belongs to the GatB/GatE family. GatB subfamily. Heterotrimer of A, B and C subunits.

The catalysed reaction is L-glutamyl-tRNA(Gln) + L-glutamine + ATP + H2O = L-glutaminyl-tRNA(Gln) + L-glutamate + ADP + phosphate + H(+). The enzyme catalyses L-aspartyl-tRNA(Asn) + L-glutamine + ATP + H2O = L-asparaginyl-tRNA(Asn) + L-glutamate + ADP + phosphate + 2 H(+). Its function is as follows. Allows the formation of correctly charged Asn-tRNA(Asn) or Gln-tRNA(Gln) through the transamidation of misacylated Asp-tRNA(Asn) or Glu-tRNA(Gln) in organisms which lack either or both of asparaginyl-tRNA or glutaminyl-tRNA synthetases. The reaction takes place in the presence of glutamine and ATP through an activated phospho-Asp-tRNA(Asn) or phospho-Glu-tRNA(Gln). This is Aspartyl/glutamyl-tRNA(Asn/Gln) amidotransferase subunit B from Prochlorococcus marinus (strain SARG / CCMP1375 / SS120).